A 283-amino-acid chain; its full sequence is Movement protein (283 aa).

It belongs to the tenuiviruses pc4 protein family.

Functionally, transports viral genome to neighboring plant cells directly through plasmosdesmata, without any budding. The movement protein allows efficient cell to cell propagation, by bypassing the host cell wall barrier. In Maize stripe virus (MStV), this protein is Movement protein.